Here is a 176-residue protein sequence, read N- to C-terminus: MAPKAVLVGLPGSGKSTIGRRLAKALGVGLLDTDVAIEQRTGRSIADIFATDGEQEFRRIEEDVVRAALADHDGVLSLGGGAVTSPGVRAALAGHTVVYLEISAAEGVRRTGGNTVRPLLAGPDRAEKYRALMAKRAPLYRRVATMRVDTNRRNPGAVVRHILSRLQVPSPSEAAT.

Gly12 to Thr17 is an ATP binding site. Mg(2+) is bound at residue Ser16. Substrate contacts are provided by Asp34, Arg58, and Gly80. Arg117 contacts ATP. Arg136 is a binding site for substrate. Arg153 provides a ligand contact to ATP.

Belongs to the shikimate kinase family. Monomer. Mg(2+) is required as a cofactor.

It localises to the cytoplasm. It catalyses the reaction shikimate + ATP = 3-phosphoshikimate + ADP + H(+). It participates in metabolic intermediate biosynthesis; chorismate biosynthesis; chorismate from D-erythrose 4-phosphate and phosphoenolpyruvate: step 5/7. Catalyzes the specific phosphorylation of the 3-hydroxyl group of shikimic acid using ATP as a cosubstrate. The polypeptide is Shikimate kinase (Mycobacterium bovis (strain ATCC BAA-935 / AF2122/97)).